The chain runs to 317 residues: MSKVAVIGATGRVGSTAAARLALLDCVNEVTLIARPKSVDKLRGLRRDILDSLAAAQKDAEITIGCERDDYVDADVIVMTAGIPRKPGQTRLDLTKDNAAIIKKYLEGVAEENPEAIVLVVTNPVDVLTYVALKVSGLPKNRVIGLGTHLDSMRFKVLIAKHFNVHMSEVHTRIIGEHGDTMVPVISSTSVGGIPVTRMPGWEDFDVEEAVREVKEAGQRIIETWGGSQFGPAQAITNLVRTILQDERRVLTVSAYLDGEIDGIRDVCIGVPARLGREGVLEIVPIELEEDEMRAFRRSVKVVKEATREAMEAISER.

8–14 is an NADP(+) binding site; sequence GATGRVG. Residues arginine 85 and arginine 91 each coordinate substrate. Residues asparagine 98 and 121 to 123 contribute to the NADP(+) site; that span reads VTN. Residues asparagine 123 and arginine 154 each contribute to the substrate site. Histidine 178 serves as the catalytic Proton acceptor.

Belongs to the LDH/MDH superfamily.

The enzyme catalyses (S)-malate + NADP(+) = oxaloacetate + NADPH + H(+). It carries out the reaction (S)-malate + NAD(+) = oxaloacetate + NADH + H(+). Catalyzes the reversible oxidation of malate to oxaloacetate. In Methanopyrus kandleri (strain AV19 / DSM 6324 / JCM 9639 / NBRC 100938), this protein is Malate dehydrogenase (mdh).